We begin with the raw amino-acid sequence, 523 residues long: Tyrosine-protein kinase transforming protein Src (523 aa).

The disordered stretch occupies residues 1–50 (MGSSKSKPKDPSQRRRSLEPPDSTHHGGFPASQTPNKTAAPDTHRTPSRS). A lipid anchor (N-myristoyl glycine; by host) is attached at glycine 2. Positions 7–25 (KPKDPSQRRRSLEPPDSTH) are enriched in basic and acidic residues. The SH3 domain maps to 71–139 (TSPQRAGALA…PSNYVAPSDS (69 aa)). The SH2 domain maps to 145 to 242 (WYFGKITRRE…GLCHRLTNVC (98 aa)). In terms of domain architecture, Protein kinase spans 264–514 (LRLEVKLGQG…TFEYLQAQLL (251 aa)). ATP contacts are provided by residues 270–278 (LGQGYFGEV) and lysine 292. Aspartate 383 functions as the Proton acceptor in the catalytic mechanism. The residue at position 413 (tyrosine 413) is a Phosphotyrosine; by autocatalysis.

It belongs to the protein kinase superfamily. Tyr protein kinase family. SRC subfamily. Homodimer. Post-translationally, the phosphorylated form is termed pp60v-src.

It catalyses the reaction L-tyrosyl-[protein] + ATP = O-phospho-L-tyrosyl-[protein] + ADP + H(+). This phosphoprotein, required for both the initiation and the maintenance of neoplastic transformation, is a protein kinase that catalyzes the phosphorylation of tyrosine residues in vitro. This Gallus gallus (Chicken) protein is Tyrosine-protein kinase transforming protein Src (V-SRC).